The chain runs to 511 residues: Glutamyl-tRNA(Gln) amidotransferase subunit A, mitochondrial (511 aa).

Catalysis depends on charge relay system residues Lys72 and Ser149. Catalysis depends on Ser173, which acts as the Acyl-ester intermediate.

The protein belongs to the amidase family. GatA subfamily. As to quaternary structure, subunit of the heterotrimeric GatCAB amidotransferase (AdT) complex, composed of A, B and C subunits.

It is found in the mitochondrion. The enzyme catalyses L-glutamyl-tRNA(Gln) + L-glutamine + ATP + H2O = L-glutaminyl-tRNA(Gln) + L-glutamate + ADP + phosphate + H(+). Its function is as follows. Allows the formation of correctly charged Gln-tRNA(Gln) through the transamidation of misacylated Glu-tRNA(Gln) in the mitochondria. The reaction takes place in the presence of glutamine and ATP through an activated gamma-phospho-Glu-tRNA(Gln). This Fusarium vanettenii (strain ATCC MYA-4622 / CBS 123669 / FGSC 9596 / NRRL 45880 / 77-13-4) (Fusarium solani subsp. pisi) protein is Glutamyl-tRNA(Gln) amidotransferase subunit A, mitochondrial.